Consider the following 76-residue polypeptide: Large ribosomal subunit protein bL31 (76 aa).

This sequence belongs to the bacterial ribosomal protein bL31 family. Type A subfamily. As to quaternary structure, part of the 50S ribosomal subunit.

In terms of biological role, binds the 23S rRNA. This Beijerinckia indica subsp. indica (strain ATCC 9039 / DSM 1715 / NCIMB 8712) protein is Large ribosomal subunit protein bL31.